Consider the following 86-residue polypeptide: MPKSEIHPKWYPDAKVICNGEVVMTTGSTQPELHVDVWSGNHPFFTGTQKILDTEGRVDRFMKKYGMGSANSATSKEQKEEKDSKK.

Positions 65–86 (YGMGSANSATSKEQKEEKDSKK) are disordered. A compositionally biased stretch (basic and acidic residues) spans 76-86 (KEQKEEKDSKK).

It belongs to the bacterial ribosomal protein bL31 family. Type A subfamily. Part of the 50S ribosomal subunit.

Binds the 23S rRNA. The protein is Large ribosomal subunit protein bL31 of Prochlorococcus marinus (strain AS9601).